Reading from the N-terminus, the 216-residue chain is Pyrrolidone-carboxylate peptidase (216 aa).

Active-site residues include Glu80, Cys143, and His167.

This sequence belongs to the peptidase C15 family. In terms of assembly, homotetramer.

It is found in the cytoplasm. The catalysed reaction is Release of an N-terminal pyroglutamyl group from a polypeptide, the second amino acid generally not being Pro.. In terms of biological role, removes 5-oxoproline from various penultimate amino acid residues except L-proline. In Streptomyces coelicolor (strain ATCC BAA-471 / A3(2) / M145), this protein is Pyrrolidone-carboxylate peptidase (pcp).